Consider the following 229-residue polypeptide: 2-C-methyl-D-erythritol 4-phosphate cytidylyltransferase (229 aa).

Belongs to the IspD/TarI cytidylyltransferase family. IspD subfamily.

The catalysed reaction is 2-C-methyl-D-erythritol 4-phosphate + CTP + H(+) = 4-CDP-2-C-methyl-D-erythritol + diphosphate. It participates in isoprenoid biosynthesis; isopentenyl diphosphate biosynthesis via DXP pathway; isopentenyl diphosphate from 1-deoxy-D-xylulose 5-phosphate: step 2/6. Its function is as follows. Catalyzes the formation of 4-diphosphocytidyl-2-C-methyl-D-erythritol from CTP and 2-C-methyl-D-erythritol 4-phosphate (MEP). The sequence is that of 2-C-methyl-D-erythritol 4-phosphate cytidylyltransferase from Clostridium botulinum (strain 657 / Type Ba4).